Reading from the N-terminus, the 311-residue chain is MQENQQITKKEQYNLNKLQKRLRRNVGEAIADFNMIEEGDRIMVCLSGGKDSYTMLEILRNLQQSAPINFSLVAVNLDQKQPGFPEHVLLEYLEKLGVEYKIVEENTYGIVKEKIPEGKTTCSLCSRLRRGILYRTATELGATKIALGHHRDDILQTLFLNMFYGGKMKGMPPKLMSDDGKHIVIRPLAYCREKDIQRFADAKAFPIIPCNLCGSQPNLQRQVIADMLRDWDKRYPGRIETMFSAMQNVVPSHLCDSNLFDFKGITHGSEVVNGGDLAFDREEIPLQPAGWQPEEDENQLDELRLNVVEVK.

The PP-loop motif signature appears at 47–52 (SGGKDS). [4Fe-4S] cluster contacts are provided by C122, C125, and C213.

The protein belongs to the TtcA family. In terms of assembly, homodimer. Mg(2+) is required as a cofactor. The cofactor is [4Fe-4S] cluster.

It localises to the cytoplasm. It catalyses the reaction cytidine(32) in tRNA + S-sulfanyl-L-cysteinyl-[cysteine desulfurase] + AH2 + ATP = 2-thiocytidine(32) in tRNA + L-cysteinyl-[cysteine desulfurase] + A + AMP + diphosphate + H(+). It functions in the pathway tRNA modification. Its function is as follows. Catalyzes the ATP-dependent 2-thiolation of cytidine in position 32 of tRNA, to form 2-thiocytidine (s(2)C32). The sulfur atoms are provided by the cysteine/cysteine desulfurase (IscS) system. In Shigella dysenteriae serotype 1 (strain Sd197), this protein is tRNA-cytidine(32) 2-sulfurtransferase.